The sequence spans 192 residues: MTLPAAFYERDTVTVAKDLLGCLLVHREEVTTAGRIVEVEAYLRGDPAAHSYRGTTKRNRVMFGPAGHAYVYRIYGLHTCVNVVTGTEGAGEAVLVRALEPVVGLDLMQARRGTDDPLSLASGPGKLTQALGITMDLNGTSLRDGPLQVRSPANPPELQPENIVQTTRVGITKAADLPLRFYLKGSRYVSRR.

This sequence belongs to the DNA glycosylase MPG family.

In Methanoculleus marisnigri (strain ATCC 35101 / DSM 1498 / JR1), this protein is Putative 3-methyladenine DNA glycosylase.